A 523-amino-acid chain; its full sequence is Butyrophilin subfamily 2 member A2 (523 aa).

An N-terminal signal peptide occupies residues 1–32; it reads MEPAAALHFSLPASLLLLLLLLLLSLCALVSA. Residues 33-265 lie on the Extracellular side of the membrane; it reads QFTVVGPANP…AVILTASPWM (233 aa). Residues 34–145 form the Ig-like V-type domain; it reads FTVVGPANPI…SYDEAILRLV (112 aa). Residues N50, N118, N220, and N226 are each glycosylated (N-linked (GlcNAc...) asparagine). C55 and C129 are joined by a disulfide. The Ig-like C2-type domain maps to 153–234; the sequence is PLIEIKAQED…VNNTLLGQEK (82 aa). Residues 266–286 traverse the membrane as a helical segment; that stretch reads VSMTVILAVFIIFMAVSICCI. Residues 286-321 are a coiled coil; sequence IKKLQREKKILSGEKKVEQEEKEIAQQLQEELRWRR. Residues 287 to 523 are Cytoplasmic-facing; it reads KKLQREKKIL…LHRVGTHQSL (237 aa). The region spanning 309 to 502 is the B30.2/SPRY domain; sequence IAQQLQEELR…IFICPALTGA (194 aa).

The protein belongs to the immunoglobulin superfamily. BTN/MOG family. Post-translationally, N-glycosylated. In terms of tissue distribution, highly expressed in brain, bone marrow, small intestine, muscle, spleen and pancreas. Moderate expression was seen in lung, liver and kidney.

Its subcellular location is the membrane. Inhibits the proliferation of CD4 and CD8 T-cells activated by anti-CD3 antibodies, T-cell metabolism and IL2 and IFNG secretion. The chain is Butyrophilin subfamily 2 member A2 (BTN2A2) from Homo sapiens (Human).